The chain runs to 280 residues: Release factor glutamine methyltransferase (280 aa).

Residues 120 to 124 (GTGSG), D143, and N186 contribute to the S-adenosyl-L-methionine site. 186–189 (NPPY) is a substrate binding site.

Belongs to the protein N5-glutamine methyltransferase family. PrmC subfamily.

The catalysed reaction is L-glutaminyl-[peptide chain release factor] + S-adenosyl-L-methionine = N(5)-methyl-L-glutaminyl-[peptide chain release factor] + S-adenosyl-L-homocysteine + H(+). Methylates the class 1 translation termination release factors RF1/PrfA and RF2/PrfB on the glutamine residue of the universally conserved GGQ motif. This is Release factor glutamine methyltransferase from Koribacter versatilis (strain Ellin345).